The chain runs to 143 residues: Large ribosomal subunit protein uL15 (143 aa).

The interval 1–54 is disordered; sequence MELNSIKPAEGAKHAKRRVGRGIGSGLGKTAGRGHKGQKSRSGGYHKVGFEGGQ. Gly residues predominate over residues 21 to 31; sequence RGIGSGLGKTA.

Belongs to the universal ribosomal protein uL15 family. Part of the 50S ribosomal subunit.

In terms of biological role, binds to the 23S rRNA. The sequence is that of Large ribosomal subunit protein uL15 from Paracidovorax citrulli (strain AAC00-1) (Acidovorax citrulli).